The sequence spans 175 residues: Large ribosomal subunit protein uL6 (175 aa).

It belongs to the universal ribosomal protein uL6 family. As to quaternary structure, part of the 50S ribosomal subunit.

Functionally, this protein binds to the 23S rRNA, and is important in its secondary structure. It is located near the subunit interface in the base of the L7/L12 stalk, and near the tRNA binding site of the peptidyltransferase center. This Xylella fastidiosa (strain M12) protein is Large ribosomal subunit protein uL6.